A 204-amino-acid polypeptide reads, in one-letter code: Protein PAXX (204 aa).

The 43-residue stretch at 37–79 folds into the PISA domain; the sequence is FNLYVTDAAELWSTCFTPDSLAALKARFGLSAAEDITPRFRAA. Position 134 is a phosphoserine (S134). The disordered stretch occupies residues 143-204; that stretch reads EETAVSPRKS…PAGGVDFDET (62 aa). Phosphothreonine is present on T145. 2 positions are modified to phosphoserine: S148 and S152. The tract at residues 171-204 is mediates interaction with XRCC5/Ku80 and XRCC6/Ku70 and association with the non-homologous end joining core complex; sequence GPGPGVRRRCPGESLINPGFKSKKPAGGVDFDET. The XLM signature appears at 190 to 204; that stretch reads FKSKKPAGGVDFDET.

Belongs to the XRCC4-XLF family. PAXX subfamily. Homodimer. Interacts with the DNA-bound XRCC5/Ku80 and XRCC6/Ku70 heterodimer (Ku complex); the interaction is direct. Associated component of the non-homologous end joining (NHEJ) complex, composed of the core proteins PRKDC, LIG4, XRCC4, XRCC6/Ku70, XRCC5/Ku86 and NHEJ1/XLF. Interacts with POLL (DNA polymerase lambda); promoting POLL recruitment to double-strand breaks (DSBs) and stimulation of the end-filling activity of POLL. In terms of processing, phosphorylation may inhibit interaction with the DNA-bound XRCC5/Ku80 and XRCC6/Ku70 heterodimer (Ku complex).

The protein localises to the nucleus. Its subcellular location is the chromosome. It localises to the cytoplasm. In terms of biological role, non-essential DNA repair protein involved in DNA non-homologous end joining (NHEJ); participates in double-strand break (DSB) repair and V(D)J recombination. May act as a scaffold required for accumulation of the Ku heterodimer, composed of XRCC5/Ku80 and XRCC6/Ku70, at double-strand break sites and promote the assembly and/or stability of the NHEJ machinery. Involved in NHEJ by promoting the ligation of blunt-ended DNA ends. Together with NHEJ1/XLF, collaborates with DNA polymerase lambda (POLL) to promote joining of non-cohesive DNA ends. Constitutes a non-essential component of classical NHEJ: has a complementary but distinct function with NHEJ1/XLF in DNA repair. Able to restrict infection by herpesvirus 1 (HSV-1) via an unknown mechanism. This Homo sapiens (Human) protein is Protein PAXX.